A 149-amino-acid polypeptide reads, in one-letter code: D-aminoacyl-tRNA deacylase (149 aa).

Positions 137-138 (GP) match the Gly-cisPro motif, important for rejection of L-amino acids motif.

The protein belongs to the DTD family. As to quaternary structure, homodimer.

It localises to the cytoplasm. It catalyses the reaction glycyl-tRNA(Ala) + H2O = tRNA(Ala) + glycine + H(+). It carries out the reaction a D-aminoacyl-tRNA + H2O = a tRNA + a D-alpha-amino acid + H(+). An aminoacyl-tRNA editing enzyme that deacylates mischarged D-aminoacyl-tRNAs. Also deacylates mischarged glycyl-tRNA(Ala), protecting cells against glycine mischarging by AlaRS. Acts via tRNA-based rather than protein-based catalysis; rejects L-amino acids rather than detecting D-amino acids in the active site. By recycling D-aminoacyl-tRNA to D-amino acids and free tRNA molecules, this enzyme counteracts the toxicity associated with the formation of D-aminoacyl-tRNA entities in vivo and helps enforce protein L-homochirality. This Pediococcus pentosaceus (strain ATCC 25745 / CCUG 21536 / LMG 10740 / 183-1w) protein is D-aminoacyl-tRNA deacylase.